An 81-amino-acid polypeptide reads, in one-letter code: Dermaseptin-S6 (81 aa).

The N-terminal stretch at 1–22 is a signal peptide; that stretch reads MDILKKSLFFILFLGLVSLSIS. Positions 22–49 are disordered; sequence SEEEKRENEDEEDQEDDEQSEEKRGLWS. The propeptide occupies 23–45; sequence EEEKRENEDEEDQEDDEQSEEKR. Positions 30–41 are enriched in acidic residues; the sequence is EDEEDQEDDEQS. An Isoleucine amide modification is found at I78. Residues 80–81 constitute a propeptide that is removed on maturation; it reads EQ.

It belongs to the frog skin active peptide (FSAP) family. Dermaseptin subfamily. Expressed by the skin glands.

The protein localises to the secreted. Antimicrobial peptide. The protein is Dermaseptin-S6 of Phyllomedusa sauvagei (Sauvage's leaf frog).